Here is a 594-residue protein sequence, read N- to C-terminus: NADH-quinone oxidoreductase subunit C/D (594 aa).

The tract at residues 1–185 is NADH dehydrogenase I subunit C; that stretch reads MTTGSALYIP…DPFSLNLAKQ (185 aa). The tract at residues 209 to 594 is NADH dehydrogenase I subunit D; the sequence is DYMFLNLGPN…IDFVMADVDR (386 aa).

The protein in the N-terminal section; belongs to the complex I 30 kDa subunit family. This sequence in the C-terminal section; belongs to the complex I 49 kDa subunit family. NDH-1 is composed of 13 different subunits. Subunits NuoB, CD, E, F, and G constitute the peripheral sector of the complex.

The protein resides in the cell inner membrane. It catalyses the reaction a quinone + NADH + 5 H(+)(in) = a quinol + NAD(+) + 4 H(+)(out). Functionally, NDH-1 shuttles electrons from NADH, via FMN and iron-sulfur (Fe-S) centers, to quinones in the respiratory chain. The immediate electron acceptor for the enzyme in this species is believed to be ubiquinone. Couples the redox reaction to proton translocation (for every two electrons transferred, four hydrogen ions are translocated across the cytoplasmic membrane), and thus conserves the redox energy in a proton gradient. The protein is NADH-quinone oxidoreductase subunit C/D of Pseudomonas fluorescens (strain Pf0-1).